The chain runs to 173 residues: MKKIRGLCLPVMLGAVLMSQHVHAADNLTFKGKLIIPACTVQNAEVNWGDIEIQNLVQSGGNQKDFTVDMNCPYSLGTMKVTITSNGQTGNSILVPNTSTASGDGLLIYLYNSNNSGIGNAVTLGSQVTPGKITGTAPARKITLYAKLGYKGNMQSLQAGTFSATATLVASYS.

The N-terminal stretch at 1 to 24 (MKKIRGLCLPVMLGAVLMSQHVHA) is a signal peptide.

The protein localises to the secreted. Its subcellular location is the fimbrium. In terms of biological role, fimbriae (also called pili), polar filaments radiating from the surface of the bacterium to a length of 0.5-1.5 micrometers and numbering 100-300 per cell, enable bacteria to colonize the epithelium of specific host organs. The polypeptide is Fimbrial protein PrsE (prsE) (Escherichia coli).